The following is a 310-amino-acid chain: Homoserine kinase (310 aa).

Position 91–101 (91–101 (PIGSGLGSSAC)) interacts with ATP.

The protein belongs to the GHMP kinase family. Homoserine kinase subfamily.

It localises to the cytoplasm. It carries out the reaction L-homoserine + ATP = O-phospho-L-homoserine + ADP + H(+). It participates in amino-acid biosynthesis; L-threonine biosynthesis; L-threonine from L-aspartate: step 4/5. Catalyzes the ATP-dependent phosphorylation of L-homoserine to L-homoserine phosphate. In Escherichia coli O81 (strain ED1a), this protein is Homoserine kinase.